Consider the following 403-residue polypeptide: Coenzyme A biosynthesis bifunctional protein CoaBC (403 aa).

Residues 1 to 197 (MLHHVKLIYA…LHPKSLEGKR (197 aa)) form a phosphopantothenoylcysteine decarboxylase region. Positions 198–403 (VLVTAGATRE…RLWDEIEKML (206 aa)) are phosphopantothenate--cysteine ligase. Residues D287, K297, and F330 each contribute to the CTP site.

It in the N-terminal section; belongs to the HFCD (homo-oligomeric flavin containing Cys decarboxylase) superfamily. In the C-terminal section; belongs to the PPC synthetase family. Mg(2+) is required as a cofactor. Requires FMN as cofactor.

It carries out the reaction N-[(R)-4-phosphopantothenoyl]-L-cysteine + H(+) = (R)-4'-phosphopantetheine + CO2. The enzyme catalyses (R)-4'-phosphopantothenate + L-cysteine + CTP = N-[(R)-4-phosphopantothenoyl]-L-cysteine + CMP + diphosphate + H(+). It functions in the pathway cofactor biosynthesis; coenzyme A biosynthesis. Functionally, catalyzes two sequential steps in the biosynthesis of coenzyme A. In the first step cysteine is conjugated to 4'-phosphopantothenate to form 4-phosphopantothenoylcysteine. In the second step the latter compound is decarboxylated to form 4'-phosphopantotheine. This Thermococcus kodakarensis (strain ATCC BAA-918 / JCM 12380 / KOD1) (Pyrococcus kodakaraensis (strain KOD1)) protein is Coenzyme A biosynthesis bifunctional protein CoaBC.